A 185-amino-acid polypeptide reads, in one-letter code: UPF0301 protein PSHAa2600 (185 aa).

It belongs to the UPF0301 (AlgH) family.

The polypeptide is UPF0301 protein PSHAa2600 (Pseudoalteromonas translucida (strain TAC 125)).